The chain runs to 452 residues: Phosphoglucosamine mutase (452 aa).

Ser-104 (phosphoserine intermediate) is an active-site residue. The Mg(2+) site is built by Ser-104, Asp-246, Asp-248, and Asp-250. Ser-104 carries the phosphoserine modification.

This sequence belongs to the phosphohexose mutase family. Mg(2+) is required as a cofactor. Activated by phosphorylation.

The catalysed reaction is alpha-D-glucosamine 1-phosphate = D-glucosamine 6-phosphate. Catalyzes the conversion of glucosamine-6-phosphate to glucosamine-1-phosphate. The protein is Phosphoglucosamine mutase of Streptomyces griseus subsp. griseus (strain JCM 4626 / CBS 651.72 / NBRC 13350 / KCC S-0626 / ISP 5235).